The following is a 312-amino-acid chain: Non-structural protein 12A (312 aa).

The segment covering 1 to 23 (MFKSGSGSLKRSGSISSVKSFSG) has biased composition (low complexity). Disordered regions lie at residues 1-37 (MFKS…RGSV), 63-97 (VPEK…YNQN), and 114-162 (KGRG…TGDG). The span at 63–73 (VPEKTKSEGNL) shows a compositional bias: basic and acidic residues. Over residues 74–97 (KNKSSVITGNFESSGPTNAHYNQN) the composition is skewed to polar residues. The segment covering 122-134 (DARHTATDSRLSQ) has biased composition (basic and acidic residues).

This sequence belongs to the phytoreovirus non-structural protein Pns12A family.

It is found in the host cytoplasm. Its function is as follows. Constituent of viral factories. The chain is Non-structural protein 12A from Rice dwarf virus (isolate Fujian) (RDV).